A 294-amino-acid chain; its full sequence is N-acetylmuramic acid 6-phosphate etherase (294 aa).

The 164-residue stretch at 54 to 217 (VIKSFEEEGR…STASMIGVGK (164 aa)) folds into the SIS domain. Glu82 acts as the Proton donor in catalysis. Residue Glu113 is part of the active site.

It belongs to the GCKR-like family. MurNAc-6-P etherase subfamily. Homodimer.

It carries out the reaction N-acetyl-D-muramate 6-phosphate + H2O = N-acetyl-D-glucosamine 6-phosphate + (R)-lactate. It participates in amino-sugar metabolism; N-acetylmuramate degradation. Specifically catalyzes the cleavage of the D-lactyl ether substituent of MurNAc 6-phosphate, producing GlcNAc 6-phosphate and D-lactate. This chain is N-acetylmuramic acid 6-phosphate etherase, found in Bacillus cereus (strain ATCC 14579 / DSM 31 / CCUG 7414 / JCM 2152 / NBRC 15305 / NCIMB 9373 / NCTC 2599 / NRRL B-3711).